The following is a 309-amino-acid chain: Taste receptor type 2 member 46 (309 aa).

M1 is a topological domain (extracellular). The helical transmembrane segment at 2 to 22 (ITFLPIIFSILIVVTFVIGNF) threads the bilayer. Over 23 to 46 (ANGFIALANSIEWFKRQKISFADQ) the chain is Cytoplasmic. A helical membrane pass occupies residues 47-67 (ILTALAVSRVGLLWVLLLNWY). The Extracellular segment spans residues 68-86 (ATELNPAFYSIEVRITAYN). The helical transmembrane segment at 87-107 (LWAVINHFSNWLATSLSIFYL) threads the bilayer. At 108 to 126 (LKIANFSNLIFLCLKRRVK) the chain is on the cytoplasmic side. The helical transmembrane segment at 127–147 (SVVLVILLGPLLFLVCHLFVI) threads the bilayer. Topologically, residues 148–178 (NMNQIIWTKEYEGNMTWKIKLRSAMYLSNTT) are extracellular. Residues N161 and N176 are each glycosylated (N-linked (GlcNAc...) asparagine). The helical transmembrane segment at 179–199 (VTILANLVPFTLTLISFLLLI) threads the bilayer. At 200-229 (CSLCKHLEKMQLHGKGSQDPSMKVHIKALQ) the chain is on the cytoplasmic side. The helical transmembrane segment at 230–250 (TVTSFLLLCAIYFLSIIMSVW) threads the bilayer. Residues 251 to 259 (SFESLENKP) lie on the Extracellular side of the membrane. The chain crosses the membrane as a helical span at residues 260–280 (VFMFCEAITFSYPSTHPFILI). Residues 281 to 309 (WGNKKLKQTFLSVLWHVRYWVKGEKPSXP) are Cytoplasmic-facing.

It belongs to the G-protein coupled receptor T2R family.

It localises to the membrane. The protein resides in the cell projection. It is found in the cilium membrane. Its function is as follows. Receptor that may play a role in the perception of bitterness and is gustducin-linked. May play a role in sensing the chemical composition of the gastrointestinal content. The activity of this receptor may stimulate alpha gustducin, mediate PLC-beta-2 activation and lead to the gating of TRPM5. In airway epithelial cells, binding of bitter compounds increases the intracellular calcium ion concentration and stimulates ciliary beat frequency. The polypeptide is Taste receptor type 2 member 46 (TAS2R46) (Pan troglodytes (Chimpanzee)).